Consider the following 153-residue polypeptide: Pheromone-binding protein Gp-9 (153 aa).

The signal sequence occupies residues 1–19 (MKTFVLHIFIFALVAFASA). Disulfide bonds link C37-C77, C73-C129, and C118-C138.

It belongs to the PBP/GOBP family. Homodimer.

The protein localises to the secreted. Functionally, colony queen number, a major feature of social organization, is associated with worker genotype for Gp-9. Colonies are headed by either a single reproductive queen (monogyne form) or multiple queens (polygyne form). Differences in worker Gp-9 genotypes between social forms may cause differences in workers' abilities to recognize queens and regulate their numbers. In Solenopsis saevissima (Fire ant), this protein is Pheromone-binding protein Gp-9.